Here is a 234-residue protein sequence, read N- to C-terminus: LexA repressor (234 aa).

A DNA-binding region (H-T-H motif) is located at residues 26–46; sequence FEEMKEALDLKSKSGVHRLIS. Positions 73–100 are disordered; that stretch reads AVGKAAPVSQREAANTNSALPPLRAAPK. Residues 91-100 are compositionally biased toward low complexity; sequence ALPPLRAAPK. Catalysis depends on for autocatalytic cleavage activity residues S154 and K192.

The protein belongs to the peptidase S24 family. As to quaternary structure, homodimer.

It carries out the reaction Hydrolysis of Ala-|-Gly bond in repressor LexA.. Functionally, represses a number of genes involved in the response to DNA damage (SOS response), including recA and lexA. In the presence of single-stranded DNA, RecA interacts with LexA causing an autocatalytic cleavage which disrupts the DNA-binding part of LexA, leading to derepression of the SOS regulon and eventually DNA repair. The protein is LexA repressor of Novosphingobium aromaticivorans (strain ATCC 700278 / DSM 12444 / CCUG 56034 / CIP 105152 / NBRC 16084 / F199).